A 160-amino-acid chain; its full sequence is Cyclic pyranopterin monophosphate synthase (160 aa).

Residues 74-76 (LSH) and 112-113 (ME) each bind substrate. Residue Asp-127 is part of the active site.

This sequence belongs to the MoaC family. Homohexamer; trimer of dimers.

The enzyme catalyses (8S)-3',8-cyclo-7,8-dihydroguanosine 5'-triphosphate = cyclic pyranopterin phosphate + diphosphate. The protein operates within cofactor biosynthesis; molybdopterin biosynthesis. Catalyzes the conversion of (8S)-3',8-cyclo-7,8-dihydroguanosine 5'-triphosphate to cyclic pyranopterin monophosphate (cPMP). This Pelobacter propionicus (strain DSM 2379 / NBRC 103807 / OttBd1) protein is Cyclic pyranopterin monophosphate synthase.